Consider the following 171-residue polypeptide: Putative phosphoesterase BH1439 (171 aa).

The active-site Proton donor is the His34. 2 short sequence motifs (HXTX) span residues 34–37 (HVTL) and 115–118 (HLTI). The Proton acceptor role is filled by His115.

This sequence belongs to the 2H phosphoesterase superfamily. YjcG family.

In Halalkalibacterium halodurans (strain ATCC BAA-125 / DSM 18197 / FERM 7344 / JCM 9153 / C-125) (Bacillus halodurans), this protein is Putative phosphoesterase BH1439.